The chain runs to 289 residues: RING-H2 finger protein ATL29 (289 aa).

A helical transmembrane segment spans residues 25 to 45 (VILTVILLVFFFIGFFTLYFC). The segment at 110 to 152 (CAICLLEFDGDHVLRLLTTCYHVFHQECIDLWFESHRTCPVCR) adopts an RING-type; atypical zinc-finger fold. The interval 179 to 237 (TSDDEEDDHHRQQTTTQIDTWPSSGQTSSIKKEQNLPEKFSRSHSTGHSIVRNKPEEED) is disordered. Residues 191–207 (QTTTQIDTWPSSGQTSS) show a composition bias toward polar residues. Over residues 208 to 219 (IKKEQNLPEKFS) the composition is skewed to basic and acidic residues.

The protein belongs to the RING-type zinc finger family. ATL subfamily.

The protein resides in the membrane. The enzyme catalyses S-ubiquitinyl-[E2 ubiquitin-conjugating enzyme]-L-cysteine + [acceptor protein]-L-lysine = [E2 ubiquitin-conjugating enzyme]-L-cysteine + N(6)-ubiquitinyl-[acceptor protein]-L-lysine.. It functions in the pathway protein modification; protein ubiquitination. The sequence is that of RING-H2 finger protein ATL29 (ATL29) from Arabidopsis thaliana (Mouse-ear cress).